Here is a 433-residue protein sequence, read N- to C-terminus: 3-phosphoshikimate 1-carboxyvinyltransferase (433 aa).

Lys-21, Ser-22, and Arg-26 together coordinate 3-phosphoshikimate. Lys-21 contributes to the phosphoenolpyruvate binding site. Positions 92 and 120 each coordinate phosphoenolpyruvate. 3-phosphoshikimate is bound by residues Ser-166, Gln-168, Asp-317, and Lys-344. Gln-168 contacts phosphoenolpyruvate. The active-site Proton acceptor is the Asp-317. Phosphoenolpyruvate-binding residues include Arg-348 and Arg-391.

Belongs to the EPSP synthase family. In terms of assembly, monomer.

The protein localises to the cytoplasm. The enzyme catalyses 3-phosphoshikimate + phosphoenolpyruvate = 5-O-(1-carboxyvinyl)-3-phosphoshikimate + phosphate. It participates in metabolic intermediate biosynthesis; chorismate biosynthesis; chorismate from D-erythrose 4-phosphate and phosphoenolpyruvate: step 6/7. Catalyzes the transfer of the enolpyruvyl moiety of phosphoenolpyruvate (PEP) to the 5-hydroxyl of shikimate-3-phosphate (S3P) to produce enolpyruvyl shikimate-3-phosphate and inorganic phosphate. The chain is 3-phosphoshikimate 1-carboxyvinyltransferase from Caldicellulosiruptor saccharolyticus (strain ATCC 43494 / DSM 8903 / Tp8T 6331).